A 451-amino-acid chain; its full sequence is L,D-transpeptidase 5 (451 aa).

The 122-residue stretch at 263-384 (QVVKAEVSSH…AVYGDPVEVT (122 aa)) folds into the L,D-TPase catalytic domain. Substrate contacts are provided by residues tyrosine 323 and 337 to 338 (NG). The active-site Proton donor/acceptor is the histidine 342. The active-site Nucleophile is cysteine 360. Asparagine 362 contacts substrate. Residues 417 to 451 (AAKPAATQIPVTAPVTPSDAPTPSGTPTTTNGPGG) are disordered. Residues 437–451 (PTPSGTPTTTNGPGG) show a composition bias toward low complexity.

It participates in cell wall biogenesis; peptidoglycan biosynthesis. With respect to regulation, in contrast to other LDT paralogs, LdtMt5 is not inactivated by the beta-lactam carbapenems; beta-lactam carbapenems form covalent adducts with other LDT paralogs but the formation of covalent adducts was not detected for LdtMt5. In terms of biological role, generates 3-&gt;3 cross-links in peptidoglycan, catalyzing the cleavage of the mDap(3)-D-Ala(4) bond of a tetrapeptide donor stem and the formation of a bond between the carbonyl of mDap(3) of the donor stem and the side chain of mDap(3) of the acceptor stem. Is specific for donor substrates containing a stem tetrapeptide since it cannot use pentapeptide stems. The sequence is that of L,D-transpeptidase 5 (lprQ) from Mycobacterium tuberculosis (strain ATCC 25618 / H37Rv).